Reading from the N-terminus, the 673-residue chain is Outer spore wall assembly protein SHE10 (673 aa).

The first 24 residues, 1–24, serve as a signal peptide directing secretion; the sequence is MRRVRGVGNLLVTILVVLIGFKQA. Positions 503-568 form a coiled coil; sequence ILRSQANIAF…LALEQGQGQE (66 aa). Disordered regions lie at residues 530 to 551 and 587 to 673; these read LEQERQIQEQKEREQQELAENE and TPLG…SQAN. Acidic residues-rich tracts occupy residues 593-605 and 612-629; these read DNTDYENALDDAD and GDSEDNFYDSYEGDEEDA. A coiled-coil region spans residues 617 to 647; it reads NFYDSYEGDEEDASRELERLERESAERETLD. Residues 630 to 673 show a composition bias toward basic and acidic residues; it reads SRELERLERESAERETLDRLELGQRQKLQEEQHRDELHHSSQAN.

This sequence belongs to the SHE10 family. As to quaternary structure, component of the mitochondria-localized RNase mitochondrial RNA-processing (RNase MRP) composed of one single RNA encoded by the NME1 gene and at least 31 proteins. Absent in the nucleus-localized RNase MRP (NuMRP).

The protein localises to the mitochondrion. Functionally, involved in spore wall assembly. May be a component of the mitochondrial RNase MRP (MtMRP), a ribonucleoprotein endoribonuclease involved in the cleaving RNA transcripts to generate primers for DNA replication in mitochondria. In Lachancea thermotolerans (strain ATCC 56472 / CBS 6340 / NRRL Y-8284) (Yeast), this protein is Outer spore wall assembly protein SHE10.